Here is an 856-residue protein sequence, read N- to C-terminus: DNA mismatch repair protein MutS (856 aa).

Residue 607–614 (GPNMSGKS) participates in ATP binding.

It belongs to the DNA mismatch repair MutS family.

Functionally, this protein is involved in the repair of mismatches in DNA. It is possible that it carries out the mismatch recognition step. This protein has a weak ATPase activity. The chain is DNA mismatch repair protein MutS from Lactobacillus delbrueckii subsp. bulgaricus (strain ATCC BAA-365 / Lb-18).